The chain runs to 118 residues: Ribulose bisphosphate carboxylase small subunit (118 aa).

It belongs to the RuBisCO small chain family. As to quaternary structure, heterohexadecamer of 8 large and 8 small subunits.

Its function is as follows. RuBisCO catalyzes two reactions: the carboxylation of D-ribulose 1,5-bisphosphate, the primary event in carbon dioxide fixation, as well as the oxidative fragmentation of the pentose substrate. Both reactions occur simultaneously and in competition at the same active site. Although the small subunit is not catalytic it is essential for maximal activity. This is Ribulose bisphosphate carboxylase small subunit from Rhodobacter capsulatus (Rhodopseudomonas capsulata).